The chain runs to 603 residues: NADH-ubiquinone oxidoreductase chain 5 (603 aa).

Transmembrane regions (helical) follow at residues 4-24 (YATM…GALI), 38-58 (SIIA…MCLD), 87-107 (MTFI…SLWY), 122-142 (LIFL…QLFI), 144-160 (WEGV…WWYA), 171-191 (AILY…WFLL), 211-233 (TPLL…HPWL), 241-261 (TPVS…FLLI), 272-292 (LIQT…AVCA), 301-320 (IVAF…IGIN), 325-347 (AFLH…GSII), 370-390 (STSL…TGFY), 405-422 (NAWA…TSAY), 457-477 (LTIG…PMST), 482-502 (IPLY…LTAL), and 582-602 (GMIK…LLLI).

The protein belongs to the complex I subunit 5 family. As to quaternary structure, core subunit of respiratory chain NADH dehydrogenase (Complex I) which is composed of 45 different subunits.

The protein resides in the mitochondrion inner membrane. It carries out the reaction a ubiquinone + NADH + 5 H(+)(in) = a ubiquinol + NAD(+) + 4 H(+)(out). Its function is as follows. Core subunit of the mitochondrial membrane respiratory chain NADH dehydrogenase (Complex I) which catalyzes electron transfer from NADH through the respiratory chain, using ubiquinone as an electron acceptor. Essential for the catalytic activity and assembly of complex I. The protein is NADH-ubiquinone oxidoreductase chain 5 (MT-ND5) of Pan troglodytes (Chimpanzee).